The sequence spans 188 residues: dCTP deaminase (188 aa).

DCTP contacts are provided by residues 111–116 (KSTYAR), 135–137 (TLE), Q156, Y170, and Q180. E137 (proton donor/acceptor) is an active-site residue.

Belongs to the dCTP deaminase family. Homotrimer.

The enzyme catalyses dCTP + H2O + H(+) = dUTP + NH4(+). It participates in pyrimidine metabolism; dUMP biosynthesis; dUMP from dCTP (dUTP route): step 1/2. Catalyzes the deamination of dCTP to dUTP. The polypeptide is dCTP deaminase (Cupriavidus necator (strain ATCC 17699 / DSM 428 / KCTC 22496 / NCIMB 10442 / H16 / Stanier 337) (Ralstonia eutropha)).